Consider the following 155-residue polypeptide: RNA pyrophosphohydrolase (155 aa).

The Nudix hydrolase domain maps to 5-147; it reads RYRPNVAAIV…KRPVYKKVLE (143 aa). The Nudix box motif lies at 42–63; it reads GGIDKGESPKEALLRELKEEIG.

Belongs to the Nudix hydrolase family. RppH subfamily. A divalent metal cation is required as a cofactor.

In terms of biological role, accelerates the degradation of transcripts by removing pyrophosphate from the 5'-end of triphosphorylated RNA, leading to a more labile monophosphorylated state that can stimulate subsequent ribonuclease cleavage. This chain is RNA pyrophosphohydrolase, found in Nitratiruptor sp. (strain SB155-2).